The following is a 118-amino-acid chain: Large ribosomal subunit protein uL22 (118 aa).

The protein belongs to the universal ribosomal protein uL22 family. As to quaternary structure, part of the 50S ribosomal subunit.

Its function is as follows. This protein binds specifically to 23S rRNA; its binding is stimulated by other ribosomal proteins, e.g. L4, L17, and L20. It is important during the early stages of 50S assembly. It makes multiple contacts with different domains of the 23S rRNA in the assembled 50S subunit and ribosome. Functionally, the globular domain of the protein is located near the polypeptide exit tunnel on the outside of the subunit, while an extended beta-hairpin is found that lines the wall of the exit tunnel in the center of the 70S ribosome. The protein is Large ribosomal subunit protein uL22 of Nostoc punctiforme (strain ATCC 29133 / PCC 73102).